The chain runs to 189 residues: Large ribosomal subunit protein eL14 (189 aa).

The protein belongs to the eukaryotic ribosomal protein eL14 family.

Functionally, component of the large ribosomal subunit. The ribosome is a large ribonucleoprotein complex responsible for the synthesis of proteins in the cell. The sequence is that of Large ribosomal subunit protein eL14 from Trypanosoma brucei brucei.